A 73-amino-acid chain; its full sequence is Translation initiation factor IF-1 (73 aa).

The region spanning 1–72 (MAKQDVIEME…TKGRITYRLR (72 aa)) is the S1-like domain.

Belongs to the IF-1 family. Component of the 30S ribosomal translation pre-initiation complex which assembles on the 30S ribosome in the order IF-2 and IF-3, IF-1 and N-formylmethionyl-tRNA(fMet); mRNA recruitment can occur at any time during PIC assembly.

The protein resides in the cytoplasm. One of the essential components for the initiation of protein synthesis. Stabilizes the binding of IF-2 and IF-3 on the 30S subunit to which N-formylmethionyl-tRNA(fMet) subsequently binds. Helps modulate mRNA selection, yielding the 30S pre-initiation complex (PIC). Upon addition of the 50S ribosomal subunit IF-1, IF-2 and IF-3 are released leaving the mature 70S translation initiation complex. This Gloeobacter violaceus (strain ATCC 29082 / PCC 7421) protein is Translation initiation factor IF-1.